The chain runs to 449 residues: Exodeoxyribonuclease 7 large subunit (449 aa).

It belongs to the XseA family. Heterooligomer composed of large and small subunits.

It is found in the cytoplasm. The catalysed reaction is Exonucleolytic cleavage in either 5'- to 3'- or 3'- to 5'-direction to yield nucleoside 5'-phosphates.. In terms of biological role, bidirectionally degrades single-stranded DNA into large acid-insoluble oligonucleotides, which are then degraded further into small acid-soluble oligonucleotides. The chain is Exodeoxyribonuclease 7 large subunit from Salmonella typhimurium (strain LT2 / SGSC1412 / ATCC 700720).